The primary structure comprises 156 residues: Small ribosomal subunit protein uS7c (156 aa).

The protein belongs to the universal ribosomal protein uS7 family. Part of the 30S ribosomal subunit.

The protein localises to the plastid. It localises to the chloroplast. One of the primary rRNA binding proteins, it binds directly to 16S rRNA where it nucleates assembly of the head domain of the 30S subunit. The chain is Small ribosomal subunit protein uS7c (rps7) from Bowenia serrulata (Byfield fern).